A 183-amino-acid chain; its full sequence is MSVRKRIGVYPGTFDPITNGHFDIIQRATLVVDHLIVGVARNAGKGPLFSTDERVEMVRDELPHISTHGATVEVRAFDSLLMHFAVEMGAQVIIRGLRAVSDFEYEFQMAGMNHRLNPQVETLFLMASDRHQFISSRFVKEIGRLGGDIRPFVSPRVAKRLLSRFAQEMPLPADTTLPLQAAP.

T13 lines the substrate pocket. ATP contacts are provided by residues 13–14 (TF) and H21. Positions 45, 81, and 95 each coordinate substrate. Residues 96-98 (GLR), E106, and 131-137 (HQFISSR) each bind ATP.

Belongs to the bacterial CoaD family. Homohexamer. The cofactor is Mg(2+).

It is found in the cytoplasm. It carries out the reaction (R)-4'-phosphopantetheine + ATP + H(+) = 3'-dephospho-CoA + diphosphate. Its pathway is cofactor biosynthesis; coenzyme A biosynthesis; CoA from (R)-pantothenate: step 4/5. Reversibly transfers an adenylyl group from ATP to 4'-phosphopantetheine, yielding dephospho-CoA (dPCoA) and pyrophosphate. In Rhodospirillum centenum (strain ATCC 51521 / SW), this protein is Phosphopantetheine adenylyltransferase.